The following is an 88-amino-acid chain: Conotoxin Ca8.3 (88 aa).

A signal peptide spans 1–21; the sequence is MMLKMGAMFVLLLLFILPSSQ. A propeptide spanning residues 22 to 46 is cleaved from the precursor; the sequence is QEGDVQARKTHLKSGFYGTLAMSTR.

It belongs to the conotoxin S superfamily. Contains 5 disulfide bonds. Expressed by the venom duct.

The protein resides in the secreted. This is Conotoxin Ca8.3 from Conus caracteristicus (Characteristic cone).